The sequence spans 253 residues: 3-deoxy-manno-octulosonate cytidylyltransferase (253 aa).

This sequence belongs to the KdsB family.

The protein resides in the cytoplasm. It carries out the reaction 3-deoxy-alpha-D-manno-oct-2-ulosonate + CTP = CMP-3-deoxy-beta-D-manno-octulosonate + diphosphate. The protein operates within nucleotide-sugar biosynthesis; CMP-3-deoxy-D-manno-octulosonate biosynthesis; CMP-3-deoxy-D-manno-octulosonate from 3-deoxy-D-manno-octulosonate and CTP: step 1/1. Its pathway is bacterial outer membrane biogenesis; lipopolysaccharide biosynthesis. Activates KDO (a required 8-carbon sugar) for incorporation into bacterial lipopolysaccharide in Gram-negative bacteria. The protein is 3-deoxy-manno-octulosonate cytidylyltransferase of Idiomarina loihiensis (strain ATCC BAA-735 / DSM 15497 / L2-TR).